Consider the following 108-residue polypeptide: MSTSHPTGLEILEFTFPGSRPAGAIAPVLVGVVGSGNLEVLLEAAAGSDCSVRIETSARGFGPIWEAVLRDFHERHPLAGVRVSINDMGATPAVVSLRLDQAAAEVAS.

S35 is modified (O-(phosphoribosyl dephospho-coenzyme A)serine).

This sequence belongs to the MdcC family. In terms of processing, covalently binds the prosthetic group of malonate decarboxylase.

It is found in the cytoplasm. In terms of biological role, subunit of malonate decarboxylase, it is an acyl carrier protein to which acetyl and malonyl thioester residues are bound via a 2'-(5''-phosphoribosyl)-3'-dephospho-CoA prosthetic group and turn over during the catalytic mechanism. In Burkholderia cepacia (Pseudomonas cepacia), this protein is Malonate decarboxylase acyl carrier protein.